Consider the following 64-residue polypeptide: Large ribosomal subunit protein bL32 (64 aa).

Belongs to the bacterial ribosomal protein bL32 family.

This chain is Large ribosomal subunit protein bL32, found in Bifidobacterium longum (strain DJO10A).